We begin with the raw amino-acid sequence, 704 residues long: Protein arginine N-methyltransferase 7 (704 aa).

SAM-dependent MTase PRMT-type domains follow at residues 14–356 (ENTW…YSLW) and 366–704 (SQPA…EKSE).

It belongs to the class I-like SAM-binding methyltransferase superfamily. Protein arginine N-methyltransferase family. PRMT7 subfamily.

Its function is as follows. Essential arginine methyltransferase that can both catalyze the formation of omega-N monomethylarginine (MMA) and symmetrical dimethylarginine (sDMA). Specifically mediates the symmetrical dimethylation of arginine residues in the small nuclear ribonucleoproteins SmD1 and SmD3. The protein is Protein arginine N-methyltransferase 7 (Art7) of Drosophila grimshawi (Hawaiian fruit fly).